We begin with the raw amino-acid sequence, 332 residues long: D-galactose/methyl-galactoside binding periplasmic protein MglB (332 aa).

The signal sequence occupies residues 1–23 (MNKKVLTLSAVMASMLFGAAAHA). Residues aspartate 37 and asparagine 114 each contribute to the beta-D-galactose site. Residues aspartate 37 and asparagine 114 each contribute to the beta-D-glucose site. Aspartate 157, asparagine 159, aspartate 161, glutamine 163, and glutamine 165 together coordinate Ca(2+). Beta-D-galactose contacts are provided by histidine 175, aspartate 177, and arginine 181. Beta-D-glucose contacts are provided by histidine 175, aspartate 177, and arginine 181. Ca(2+) is bound at residue glutamate 228. Beta-D-galactose is bound by residues asparagine 234, aspartate 259, and asparagine 279. The beta-D-glucose site is built by asparagine 234, aspartate 259, and asparagine 279.

Belongs to the bacterial solute-binding protein 2 family. In terms of assembly, the ABC transporter complex is composed of one ATP-binding protein (MglA), two transmembrane proteins (MglC) and a solute-binding protein (MglB).

It localises to the periplasm. Part of the ABC transporter complex MglABC involved in galactose/methyl galactoside import. In addition, binds D-galactose and D-glucose and plays a role in the chemotaxis towards these two sugars by interacting with the Trg chemoreceptor. The sequence is that of D-galactose/methyl-galactoside binding periplasmic protein MglB (mglB) from Escherichia coli O6:H1 (strain CFT073 / ATCC 700928 / UPEC).